Reading from the N-terminus, the 447-residue chain is Phosphoglucosamine mutase (447 aa).

Ser-101 functions as the Phosphoserine intermediate in the catalytic mechanism. Mg(2+) is bound by residues Ser-101, Asp-242, Asp-244, and Asp-246. Phosphoserine is present on Ser-101.

This sequence belongs to the phosphohexose mutase family. Mg(2+) is required as a cofactor. Post-translationally, activated by phosphorylation.

It catalyses the reaction alpha-D-glucosamine 1-phosphate = D-glucosamine 6-phosphate. Its function is as follows. Catalyzes the conversion of glucosamine-6-phosphate to glucosamine-1-phosphate. This chain is Phosphoglucosamine mutase, found in Azorhizobium caulinodans (strain ATCC 43989 / DSM 5975 / JCM 20966 / LMG 6465 / NBRC 14845 / NCIMB 13405 / ORS 571).